The sequence spans 205 residues: Putative 3-methyladenine DNA glycosylase (205 aa).

The protein belongs to the DNA glycosylase MPG family.

The protein is Putative 3-methyladenine DNA glycosylase of Mycolicibacterium paratuberculosis (strain ATCC BAA-968 / K-10) (Mycobacterium paratuberculosis).